We begin with the raw amino-acid sequence, 186 residues long: Protein C (186 aa).

Polar residues predominate over residues 1–15 (MSKTDWNASGLSRPS). Residues 1–45 (MSKTDWNASGLSRPSPSAHWPSRKPWQHGQKYQTTQDRTEPPARK) form a disordered region.

It belongs to the morbillivirus protein C family. As to quaternary structure, interacts with the phosphoprotein (via C-terminus); this interaction allows C to associate with the ribonucleocapsid.

The protein resides in the host nucleus. It localises to the host cytoplasmic vesicle. In terms of biological role, ribonucleocapsid-associated protein that interacts with the phosphoprotein (P), thereby increasing replication accuracy and processivity of the polymerase complex. In Homo sapiens (Human), this protein is Protein C (P/V/C).